A 321-amino-acid chain; its full sequence is MVDARGSTPCLIGDSIRNVNDGNSLDFQYTNQFNEESEASRLLTPQTSSNHALSKMQKDDDIRDRSYTSVAELNREGALLTDEVDLENVDASKVRSNRDDLEAEEKRKKLLLLKKKQRNKSINSESFSSPSLRASKSNSLITSTDPVEDHISKYSSSGTPENITGEADDEDEDIIRNSYGQMIKNNSNRPHLAKGESYQSAEQEIDHTAPEKSEKRQERSGRSFDRQKSSAEFLRSLSRSISRGPTKNKTVSPSKGEDSRMYSTSNYSISLVDLENGPKIIPETLEEEQEDAEKEGVLMEDEGNEEYTKDLEEAANKAQPQ.

Position 2 is an N-acetylvaline (Val2). Residues 37–63 are disordered; that stretch reads SEASRLLTPQTSSNHALSKMQKDDDIR. Residues 43 to 52 show a composition bias toward polar residues; the sequence is LTPQTSSNHA. Position 44 is a phosphothreonine (Thr44). Residues Ser49, Ser69, Ser121, Ser126, Ser129, Ser137, and Ser139 each carry the phosphoserine modification. 2 disordered regions span residues 115–270 and 283–321; these read KKQR…YSIS and ETLEEEQEDAEKEGVLMEDEGNEEYTKDLEEAANKAQPQ. Polar residues-rich tracts occupy residues 120–145, 153–162, and 178–189; these read KSINSESFSSPSLRASKSNSLITSTD, KYSSSGTPEN, and SYGQMIKNNSNR. Phosphothreonine is present on Thr159. A compositionally biased stretch (basic and acidic residues) spans 204-229; the sequence is EIDHTAPEKSEKRQERSGRSFDRQKS. Positions 237–253 are enriched in polar residues; sequence LSRSISRGPTKNKTVSP. Ser238, Ser240, Ser242, and Ser270 each carry phosphoserine. Residues 284 to 305 are compositionally biased toward acidic residues; that stretch reads TLEEEQEDAEKEGVLMEDEGNE. Basic and acidic residues predominate over residues 306–315; that stretch reads EYTKDLEEAA.

The protein localises to the cytoplasm. This is an uncharacterized protein from Saccharomyces cerevisiae (strain ATCC 204508 / S288c) (Baker's yeast).